A 236-amino-acid polypeptide reads, in one-letter code: Cutinase (236 aa).

Positions 1–20 (MSLTLFSFLSLVSILCIVTA) are cleaved as a signal peptide. Cys66 and Cys143 are disulfide-bonded. Residue Ser154 is the Nucleophile of the active site. Cys202 and Cys209 are joined by a disulfide. Asp206 is a catalytic residue. Catalysis depends on His218, which acts as the Proton donor/acceptor.

Belongs to the cutinase family. Post-translationally, the 2 disulfide bonds play a critical role in holding the catalytic residues in juxta-position; reduction of the disulfide bridges results in the complete inactivation of the enzyme.

The protein localises to the secreted. It catalyses the reaction cutin + H2O = cutin monomers.. Its function is as follows. Catalyzes the hydrolysis of complex carboxylic polyesters found in the cell wall of plants. Degrades cutin, a macromolecule that forms the structure of the plant cuticle. Allows pathogenic fungi to penetrate through the cuticular barrier into the host plant during the initial stage of fungal infection. The protein is Cutinase (CUT1) of Blumeria hordei (Barley powdery mildew).